Reading from the N-terminus, the 365-residue chain is MAELRMEHIYKFYDQKEPAVDDFNLHIADKEFIVFVGPSGCGKSTTLRMVAGLEEISKGDFYIEGKRVNDVAPKDRDIAMVFQNYALYPHMTVYDNIAFGLKLRKMPKPEIKKRVEEAAKILGLEEYLHRKPKALSGGQRQRVALGRAIVRDAKVFLMDEPLSNLDAKLRVQMRAEIIKLHQRLQTTTIYVTHDQTEALTMATRIVVMKDGKIQQIGTPKDVYEFPENVFVGGFIGSPAMNFFKGKLTDGLIKIGSAALTVPEGKMKVLREKGYIGKEVIFGIRPEDIHDELIVVESYKNSSIKAKINVAELLGSEIMIYSQIDNQDFIARIDARLDIQSGDELTVAFDMNKGHFFDSETEVRIR.

One can recognise an ABC transporter domain in the interval 4–235; it reads LRMEHIYKFY…PENVFVGGFI (232 aa). 37 to 44 contacts ATP; it reads GPSGCGKS.

The protein belongs to the ABC transporter superfamily. The complex involved in maltodextrin import is composed of two ATP-binding proteins (MsmX), two transmembrane proteins (MdxF and MdxG) and a solute-binding protein (MdxE). The complex involved in arabinooligosaccharides uptake is composed of two ATP-binding proteins (MsmX), two transmembrane proteins (AraP and AraQ) and a solute-binding protein (AraN). The complex involved in galactooligosaccharides uptake is composed of two ATP-binding proteins (MsmX), two transmembrane proteins (GanP and GanQ) and a solute-binding protein (GanS). The complex involved in melibiose, raffinose and stachyose import is composed of two ATP-binding proteins (MsmX), two transmembrane proteins (MelC and MelD) and a solute-binding protein (MelE). The complex involved in polygalacturonan and rhamnogalacturonan type I uptake is probably composed of two ATP-binding proteins (MsmX), two transmembrane proteins (YtcP and YteP) and a solute-binding protein (YtcQ).

It localises to the cell membrane. Required to energize different ABC-type saccharide transporters. Part of the MdxEFG-MsmX ABC transporter complex involved in maltodextrin import, of the AraNPQ-MsmX complex involved in arabinooligosaccharides import, of the GanPQS-MsmX complex involved in galactooligosaccharides import, and of the MelEDC-MsmX complex involved in melibiose, raffinose and stachyose import. Is probably also part of the ABC transporter complex YtcQP-YteP-MsmX involved in polygalacturonan and rhamnogalacturonan type I import during pectin degradation. Responsible for energy coupling to the transport system. In Bacillus subtilis (strain 168), this protein is Oligosaccharides import ATP-binding protein MsmX (msmX).